Consider the following 516-residue polypeptide: Glycosyltransferase-like protein gnt15 (516 aa).

The Cytoplasmic segment spans residues 1–24; sequence MSNFYNNNPRRNTFRLTERIKKKP. A helical; Signal-anchor for type II membrane protein membrane pass occupies residues 25 to 45; sequence YQTLIVFILIFLFLYVFGPFG. The Extracellular portion of the chain corresponds to 46–516; it reads EKKSNNNNNN…NDNCLTREHW (471 aa). Asn152 carries N-linked (GlcNAc...) asparagine glycosylation. The disordered stretch occupies residues 199–250; the sequence is DTSNNNNNNNNNNNNNNNNNNNNNNNNNNNNNNNENNDNDNGNNNNNNDNEK. Residues 202 to 246 are compositionally biased toward low complexity; that stretch reads NNNNNNNNNNNNNNNNNNNNNNNNNNNNNNNENNDNDNGNNNNNN. Asn386 and Asn412 each carry an N-linked (GlcNAc...) asparagine glycan.

The protein belongs to the glycosyltransferase 8 family. Highly divergent.

The protein resides in the membrane. Functionally, may have a role in modulating cell adhesion and glycosylation. Essential for development. The polypeptide is Glycosyltransferase-like protein gnt15 (gnt15) (Dictyostelium discoideum (Social amoeba)).